We begin with the raw amino-acid sequence, 372 residues long: Probable peptidoglycan glycosyltransferase FtsW (372 aa).

The Cytoplasmic portion of the chain corresponds to 1–12 (MQKKSTISWSYD). A helical transmembrane segment spans residues 13-33 (AWIVICTLSLLALGLLMVASA). Residues 34–45 (SMVISDRQFGYP) are Periplasmic-facing. A helical transmembrane segment spans residues 46 to 66 (FHYFIRHLIYLSLGLTLAWVA). Residues 67–77 (SRVPIKVWKTY) lie on the Cytoplasmic side of the membrane. Residues 78-98 (SGYLFLVGFLLLILVLAPVIG) traverse the membrane as a helical segment. The Periplasmic segment spans residues 99-109 (KTVNGSRRWIQ). Residues 110-130 (LGFISLQVSEVVKFVTILYLA) traverse the membrane as a helical segment. Residues 131–142 (SFLQRYQSEVQK) are Cytoplasmic-facing. A helical transmembrane segment spans residues 143–163 (ELKGFLKPMLLVGILSGLLLL). The Periplasmic segment spans residues 164–165 (EP). A helical transmembrane segment spans residues 166-186 (DFGAAVVITMTCLALLFLAGV). Residue Arg-187 is a topological domain, cytoplasmic. The helical transmembrane segment at 188–208 (LWPFCVLLVLVAGSLILLAIL) threads the bilayer. The Periplasmic segment spans residues 209-277 (SPYRLQRLTS…LFAVLAEELG (69 aa)). Residues 278–298 (LIGEILLMGLFVLLIGRIILI) traverse the membrane as a helical segment. The Cytoplasmic portion of the chain corresponds to 299 to 315 (GRRAENSNQLYSAYLAY). Residues 316–336 (GIALWLGLQVIINIGVTAGVL) form a helical membrane-spanning segment. Residues 337-342 (PTKGLT) are Periplasmic-facing. A helical membrane pass occupies residues 343 to 363 (LPFISYGGSSLLMNCLAIGVI). Residues 364–372 (LRIAYETEN) are Cytoplasmic-facing.

This sequence belongs to the SEDS family. FtsW subfamily.

It localises to the cell inner membrane. It carries out the reaction [GlcNAc-(1-&gt;4)-Mur2Ac(oyl-L-Ala-gamma-D-Glu-L-Lys-D-Ala-D-Ala)](n)-di-trans,octa-cis-undecaprenyl diphosphate + beta-D-GlcNAc-(1-&gt;4)-Mur2Ac(oyl-L-Ala-gamma-D-Glu-L-Lys-D-Ala-D-Ala)-di-trans,octa-cis-undecaprenyl diphosphate = [GlcNAc-(1-&gt;4)-Mur2Ac(oyl-L-Ala-gamma-D-Glu-L-Lys-D-Ala-D-Ala)](n+1)-di-trans,octa-cis-undecaprenyl diphosphate + di-trans,octa-cis-undecaprenyl diphosphate + H(+). It functions in the pathway cell wall biogenesis; peptidoglycan biosynthesis. Peptidoglycan polymerase that is essential for cell division. This Coxiella burnetii (strain RSA 493 / Nine Mile phase I) protein is Probable peptidoglycan glycosyltransferase FtsW.